We begin with the raw amino-acid sequence, 1802 residues long: U3 small nucleolar RNA-associated protein 10 (1802 aa).

The stretch at Met-581–Asn-618 is one HEAT 1 repeat. The next 2 helical transmembrane spans lie at Val-946–Asn-966 and Ala-1002–Met-1022. HEAT repeat units follow at residues Gln-1046–His-1083, Leu-1253–Glu-1290, Thr-1297–Lys-1335, and Ala-1758–Glu-1795.

This sequence belongs to the HEATR1/UTP10 family. In terms of assembly, component of the ribosomal small subunit (SSU) processome.

Its subcellular location is the nucleus. The protein resides in the nucleolus. It localises to the membrane. In terms of biological role, involved in nucleolar processing of pre-18S ribosomal RNA. Involved in ribosome biosynthesis. This chain is U3 small nucleolar RNA-associated protein 10, found in Aspergillus oryzae (strain ATCC 42149 / RIB 40) (Yellow koji mold).